Here is a 115-residue protein sequence, read N- to C-terminus: uncharacterized protein (115 aa).

One can recognise an HTH arsR-type domain in the interval 1 to 91; that stretch reads MTEYNANSIR…SELEGFKNVS (91 aa). A DNA-binding region (H-T-H motif) is located at residues 30–53; that stretch reads ASLISHTLLLSYATVLRHLRILND.

Functionally, essential for virus function. This is an uncharacterized protein from Saccharolobus solfataricus (Sulfolobus solfataricus).